Reading from the N-terminus, the 486-residue chain is Cysteine--tRNA ligase (486 aa).

Cysteine 29 contributes to the Zn(2+) binding site. Positions 31–41 (ITVYDYCHLGH) match the 'HIGH' region motif. Residues cysteine 215, histidine 240, and glutamate 244 each contribute to the Zn(2+) site. A 'KMSKS' region motif is present at residues 272–276 (KMSKS). Residue lysine 275 coordinates ATP.

This sequence belongs to the class-I aminoacyl-tRNA synthetase family. As to quaternary structure, monomer. Zn(2+) serves as cofactor.

The protein resides in the cytoplasm. The enzyme catalyses tRNA(Cys) + L-cysteine + ATP = L-cysteinyl-tRNA(Cys) + AMP + diphosphate. This Gloeothece citriformis (strain PCC 7424) (Cyanothece sp. (strain PCC 7424)) protein is Cysteine--tRNA ligase.